The chain runs to 2533 residues: Highly reducing polyketide synthase azaB (2533 aa).

In terms of domain architecture, Ketosynthase family 3 (KS3) spans 7–433; the sequence is TAPMAIIGMA…GSNAHAILES (427 aa). Catalysis depends on for beta-ketoacyl synthase activity residues Cys180, His315, and His355. The segment at 554–821 is malonyl-CoA:ACP transacylase (MAT) domain; sequence WVFTGQGAQW…VEFESSFRHM (268 aa). The interval 946 to 1081 is N-terminal hotdog fold; sequence SDLVGYSQPS…GRISVITTSD (136 aa). The region spanning 946–1254 is the PKS/mFAS DH domain; it reads SDLVGYSQPS…CQSLGRALDR (309 aa). Positions 947-1251 are dehydratase (DH) domain; that stretch reads DLVGYSQPSI…GLTCQSLGRA (305 aa). The Proton acceptor; for dehydratase activity role is filled by His978. Residues 1097 to 1254 are C-terminal hotdog fold; that stretch reads YNRRIDPRYM…CQSLGRALDR (158 aa). The active-site Proton donor; for dehydratase activity is the Asp1163. Positions 1419–1554 are methyltransferase (CMet) domain; that stretch reads TRQVSELVRL…GGKLILMETT (136 aa). An enoyl reductase (ER) domain region spans residues 1839–2155; that stretch reads GLIDTLVFHD…TGQHMGKIII (317 aa). Positions 2178–2349 are ketoreductase (KR) domain; sequence ASYVIVGGLG…AVSLDLGIVR (172 aa). In terms of domain architecture, Carrier spans 2455 to 2532; the sequence is DAAALICQEL…DLSLRVATKR (78 aa). Ser2492 bears the O-(pantetheine 4'-phosphoryl)serine mark.

Its pathway is secondary metabolite biosynthesis. In terms of biological role, highly reducing polyketide synthase; part of the gene cluster that mediates the biosynthesis of azaphilones, a class of fungal metabolites characterized by a highly oxygenated pyrano-quinone bicyclic core and exhibiting a broad range of bioactivities. In the first step, the non-reducing polyketide synthase azaA forms the hexaketide precursor from successive condensations of five malonyl-CoA units, presumably with a simple acetyl-CoA starter unit. The reactive polyketide chain then undergoes a PT-mediated C2-C7 cyclization to afford the aromatic ring and is eventually released as an aldehyde through the R-domain. The putative ketoreductase azaE is proposed to catalyze the reduction of the terminal ketone resulting in the early culture product FK17-P2a. The monooxygenase azaH was demonstrated to be the only enzyme required to convert FK17-P2a to azanigerone E. AzaH first hydroxylates the benzaldehyde intermediate FK17-P2a at C4, which triggers the formation of the pyran-ring to afford azanigerone E. In parallel, the 2,4-dimethylhexanoyl chain is synthesized by the HR-PKS azaB and is proposed to be transferred to the C4-hydroxyl of azanigerone E by the acyltransferase azaD directly from the ACP domain of azaB. Alternatively, the 2,4-dimethyl-hexanoyl chain may be offloaded from the HR-PKS as a carboxylic acid and converted to an acyl-CoA by azaF. The resulting acyl-CoA molecule could then be taken up as a substrate by AzaD to form azanigerone B. To yield the carboxylic acid substituent in azanigerone A, the hydroxypropyl side chain of azanigerone B would need to undergo a C-C oxidative cleavage catalyzed by cytochrome P450 AzaI. AzaI is proposed to act on a vicinal diol that leads to a C-C bond scission either through an alkoxyradical intermediate or a peroxy complex. In the biosynthesis of azanigerone A, azanigerone B first undergoes hydroxylation at C10, possibly catalyzed by one of the two FAD-dependent monooxygenases encoded in the cluster, azaG or azaL, resulting in the vicinal diol azanigerone C. Oxidative cleavage of azanigerone C by azaI would yield the corresponding aldehyde derivative of azanigerone A. Finally, the dehydrogenase azaJ is proposed to convert the aldehyde functional group into the carboxylic acid, completing the conversion from azanigerone B to azanigerone A. Alternatively, the oxidation of aldehyde to carboxylic acid may be catalyzed by the same P450 enzyme azaI via consecutive oxidation or by endogenous alcohol dehydrogenase. This chain is Highly reducing polyketide synthase azaB, found in Aspergillus niger (strain ATCC 1015 / CBS 113.46 / FGSC A1144 / LSHB Ac4 / NCTC 3858a / NRRL 328 / USDA 3528.7).